A 322-amino-acid polypeptide reads, in one-letter code: ATP-dependent 6-phosphofructokinase (322 aa).

ATP is bound by residues glycine 12, 73–74 (RF), and 103–106 (GDGT). Aspartate 104 contacts Mg(2+). Substrate is bound at residue 126–128 (TID). The active-site Proton acceptor is the aspartate 128. Arginine 155 provides a ligand contact to ADP. Residues arginine 163 and 170-172 (MGR) each bind substrate. ADP contacts are provided by residues 186 to 188 (GSE), lysine 212, and 214 to 216 (KPS). Substrate is bound by residues glutamate 223, arginine 245, and 251 to 254 (HTQR).

The protein belongs to the phosphofructokinase type A (PFKA) family. ATP-dependent PFK group I subfamily. Prokaryotic clade 'B1' sub-subfamily. In terms of assembly, homotetramer. Requires Mg(2+) as cofactor.

Its subcellular location is the cytoplasm. It catalyses the reaction beta-D-fructose 6-phosphate + ATP = beta-D-fructose 1,6-bisphosphate + ADP + H(+). Its pathway is carbohydrate degradation; glycolysis; D-glyceraldehyde 3-phosphate and glycerone phosphate from D-glucose: step 3/4. With respect to regulation, allosterically activated by ADP and other diphosphonucleosides, and allosterically inhibited by phosphoenolpyruvate. Catalyzes the phosphorylation of D-fructose 6-phosphate to fructose 1,6-bisphosphate by ATP, the first committing step of glycolysis. The sequence is that of ATP-dependent 6-phosphofructokinase from Mesomycoplasma hyopneumoniae (strain 232) (Mycoplasma hyopneumoniae).